Reading from the N-terminus, the 347-residue chain is MGNWTAAVTEFVLLGFSLSREVELLLLVLLLPTFLLTLLGNLLIISTVLSCSRLHTPMYFFLCNLSILDILFTSVISPKVLANLGSRDKTISFAGCITQCYFYFFLGTVEFLLLTVMSYDRYATICCPLRYTTIMRPSVCIGTVVFSWVGGFLSVLFPTILISQLPFCGSNIINHFFCDSGPLLALACADTTAIELMDFMLSSMVILCCIVLVAYSYTYIILTIVRIPSASGRKKAFNTCASHLTIVIISSGITVFIYVTPSQKEYLEINKIPLVLSSVVTPFLNPFIYTLRNDTVQGVLRDVWVRVRGVFEKRMRAVLRSRLSSNKDHQGRACSSPPCVYSVKLQC.

The Extracellular segment spans residues 1–24 (MGNWTAAVTEFVLLGFSLSREVEL). N-linked (GlcNAc...) asparagine glycosylation occurs at Asn3. Residues 25 to 45 (LLLVLLLPTFLLTLLGNLLII) traverse the membrane as a helical segment. The Cytoplasmic portion of the chain corresponds to 46 to 53 (STVLSCSR). A helical membrane pass occupies residues 54 to 74 (LHTPMYFFLCNLSILDILFTS). Topologically, residues 75-98 (VISPKVLANLGSRDKTISFAGCIT) are extracellular. Cysteines 96 and 188 form a disulfide. A helical transmembrane segment spans residues 99 to 119 (QCYFYFFLGTVEFLLLTVMSY). At 120–138 (DRYATICCPLRYTTIMRPS) the chain is on the cytoplasmic side. The helical transmembrane segment at 139–159 (VCIGTVVFSWVGGFLSVLFPT) threads the bilayer. At 160–196 (ILISQLPFCGSNIINHFFCDSGPLLALACADTTAIEL) the chain is on the extracellular side. A helical transmembrane segment spans residues 197–216 (MDFMLSSMVILCCIVLVAYS). At 217 to 236 (YTYIILTIVRIPSASGRKKA) the chain is on the cytoplasmic side. The chain crosses the membrane as a helical span at residues 237 to 257 (FNTCASHLTIVIISSGITVFI). Topologically, residues 258 to 270 (YVTPSQKEYLEIN) are extracellular. The chain crosses the membrane as a helical span at residues 271 to 291 (KIPLVLSSVVTPFLNPFIYTL). Residues 292-347 (RNDTVQGVLRDVWVRVRGVFEKRMRAVLRSRLSSNKDHQGRACSSPPCVYSVKLQC) lie on the Cytoplasmic side of the membrane.

This sequence belongs to the G-protein coupled receptor 1 family.

The protein localises to the cell membrane. Odorant receptor. The sequence is that of Olfactory receptor 6J1 (OR6J1) from Homo sapiens (Human).